The primary structure comprises 164 residues: ATP synthase subunit b (164 aa).

Residues 6–26 (GELIGNFILITGSFILLLVLI) traverse the membrane as a helical segment.

The protein belongs to the ATPase B chain family. In terms of assembly, F-type ATPases have 2 components, F(1) - the catalytic core - and F(0) - the membrane proton channel. F(1) has five subunits: alpha(3), beta(3), gamma(1), delta(1), epsilon(1). F(0) has three main subunits: a(1), b(2) and c(10-14). The alpha and beta chains form an alternating ring which encloses part of the gamma chain. F(1) is attached to F(0) by a central stalk formed by the gamma and epsilon chains, while a peripheral stalk is formed by the delta and b chains.

The protein resides in the cell membrane. F(1)F(0) ATP synthase produces ATP from ADP in the presence of a proton or sodium gradient. F-type ATPases consist of two structural domains, F(1) containing the extramembraneous catalytic core and F(0) containing the membrane proton channel, linked together by a central stalk and a peripheral stalk. During catalysis, ATP synthesis in the catalytic domain of F(1) is coupled via a rotary mechanism of the central stalk subunits to proton translocation. In terms of biological role, component of the F(0) channel, it forms part of the peripheral stalk, linking F(1) to F(0). This chain is ATP synthase subunit b, found in Streptococcus pneumoniae serotype 2 (strain D39 / NCTC 7466).